The following is a 346-amino-acid chain: MAQAPDREKALELALAQIDKSFGKGSVMRLGDEVRQPISVIPTGSIALDVALGIGGLPRGRVIEIYGPESSGKTTVALHAVANAQRAGGIAAFIDAEHALDPEYAKKLGVDTDSLLVSQPDTGEQALEIADMLVRSGAIDLIVIDSVAALVPRAEIEGEMGDSHVGLQARLMSQALRKMTGALNNSGTTAIFINQLREKIGVMFGSPETTTGGKALKFYSSVRLDVRRIETLKDGTDAVGNRTRVKVVKNKVSPPFKQAEFDILYGKGISKEGSLIDMGVEQGFIRKSGSWFTYEGEQLGQGKENARNFLLENVDVANEIEKKIKEKLGIGAVLTDDEVVPAPVDF.

Residue 67-74 (GPESSGKT) coordinates ATP.

The protein belongs to the RecA family.

Its subcellular location is the cytoplasm. Can catalyze the hydrolysis of ATP in the presence of single-stranded DNA, the ATP-dependent uptake of single-stranded DNA by duplex DNA, and the ATP-dependent hybridization of homologous single-stranded DNAs. It interacts with LexA causing its activation and leading to its autocatalytic cleavage. In Mycobacteroides abscessus (strain ATCC 19977 / DSM 44196 / CCUG 20993 / CIP 104536 / JCM 13569 / NCTC 13031 / TMC 1543 / L948) (Mycobacterium abscessus), this protein is Protein RecA.